The sequence spans 314 residues: L-lactate dehydrogenase 2 (314 aa).

NAD(+)-binding positions include V16, D37, K42, Y68, and 82 to 83 (GL). Substrate contacts are provided by residues Q85, R91, and 123–126 (NPVD). NAD(+) is bound by residues 121-123 (ATN) and S146. A substrate-binding site is contributed by 151–154 (DSAR). The beta-D-fructose 1,6-bisphosphate site is built by R156 and H171. H178 acts as the Proton acceptor in catalysis. A Phosphotyrosine modification is found at Y223. T232 lines the substrate pocket.

The protein belongs to the LDH/MDH superfamily. LDH family. As to quaternary structure, homotetramer.

Its subcellular location is the cytoplasm. The catalysed reaction is (S)-lactate + NAD(+) = pyruvate + NADH + H(+). It functions in the pathway fermentation; pyruvate fermentation to lactate; (S)-lactate from pyruvate: step 1/1. Its activity is regulated as follows. Allosterically activated by fructose 1,6-bisphosphate (FBP). Functionally, catalyzes the conversion of lactate to pyruvate. The sequence is that of L-lactate dehydrogenase 2 from Bacillus cereus (strain ATCC 10987 / NRS 248).